The following is a 59-amino-acid chain: DNA gyrase inhibitor YacG (59 aa).

Zn(2+) contacts are provided by cysteine 7, cysteine 10, cysteine 25, and cysteine 29.

The protein belongs to the DNA gyrase inhibitor YacG family. Interacts with GyrB. Zn(2+) serves as cofactor.

Its function is as follows. Inhibits all the catalytic activities of DNA gyrase by preventing its interaction with DNA. Acts by binding directly to the C-terminal domain of GyrB, which probably disrupts DNA binding by the gyrase. The sequence is that of DNA gyrase inhibitor YacG from Geobacter sulfurreducens (strain ATCC 51573 / DSM 12127 / PCA).